A 141-amino-acid chain; its full sequence is Nucleoside diphosphate kinase (141 aa).

ATP-binding residues include Lys11, Phe59, Arg87, Thr93, Arg104, and Asn114. Catalysis depends on His117, which acts as the Pros-phosphohistidine intermediate.

This sequence belongs to the NDK family. In terms of assembly, homotetramer. Requires Mg(2+) as cofactor.

The protein resides in the cytoplasm. It catalyses the reaction a 2'-deoxyribonucleoside 5'-diphosphate + ATP = a 2'-deoxyribonucleoside 5'-triphosphate + ADP. The enzyme catalyses a ribonucleoside 5'-diphosphate + ATP = a ribonucleoside 5'-triphosphate + ADP. Functionally, major role in the synthesis of nucleoside triphosphates other than ATP. The ATP gamma phosphate is transferred to the NDP beta phosphate via a ping-pong mechanism, using a phosphorylated active-site intermediate. The polypeptide is Nucleoside diphosphate kinase (Bdellovibrio bacteriovorus (strain ATCC 15356 / DSM 50701 / NCIMB 9529 / HD100)).